The following is a 490-amino-acid chain: MKKKLFFALLVLILSSCSLFFQKEYGTITIDLEGGRARSINSSTGLPNLADSELEIDILTEGNSSIYKKILASEPKFFQADFPIGSRLEITVKLNGPSSSWSAHNSHTVKEGNNDIRLLLNKNASSLANVGFSTAAVVNKYEFNIAGKRIDINSRELPVFTRDSRGRLYIAYKDINWKLNRYESDGTPNNFASDSPILTTITGASSVNLASDPVTGKVYVAADSNLYRIKDDGAVTPTGGTAHPAGPIAVYNNNLFVLGVSAVSGNNPLKMFTITEEGSVLTLNQAGSLIPVSTGQITISTSGSETTINVDFKDILVKKDKIYILFAKNNLPTPSTPSPYYSLGGMLEYTYNSSGVIDNPQKYGFNDTVTAGDDIVTAGEANFYGPACFIGYDEQSISIADDGCTFKKEGGSVRIYKNVNRIFSFNTSTKSLYSYATENKWFNEYEETATPPPPLPVRLARSYCGRKIVIRGIPRSAYLSRVAQFVCKTL.

The N-terminal stretch at M1–S16 is a signal peptide. C17 is lipidated: N-palmitoyl cysteine. A lipid anchor (S-diacylglycerol cysteine) is attached at C17.

The protein localises to the cell membrane. This Treponema denticola protein is 53 kDa membrane antigen A (tdpA).